A 313-amino-acid chain; its full sequence is Type I restriction enzyme EcoprrI endonuclease subunit (313 aa).

The protein belongs to the HsdR family. As to quaternary structure, the type I restriction/modification system is composed of three polypeptides R, M and S; the restriction enzyme has stoichiometry R(2)M(2)S(1) while the methyltransferase is M(2)S(1).

It carries out the reaction Endonucleolytic cleavage of DNA to give random double-stranded fragments with terminal 5'-phosphates, ATP is simultaneously hydrolyzed.. Its function is as follows. The subtype C restriction (R) subunit of a type I restriction enzyme that recognizes 5'-CCAN(7)RTGC-3' and cleaves a random distance away. The R subunit is required for both endonuclease and ATPase activities but not for modification. Cleaves only non-methylated DNA, hemi-methylated and fully methylated DNA are not substrates. After locating a non-methylated recognition site, the enzyme complex serves as a molecular motor that translocates DNA in an ATP-dependent manner until a collision occurs that triggers cleavage. The prr locus restricts phage T4 mutants lacking polynucleotide kinase or RNA ligase; T4 mutants lacking these genes manifest a T4-induced anticodon nuclease (ACNase). This is a putative 'masking-agent' for the ACNase encoded by prrC. It is thought that Stp and other T4-encoded ACNase factors counteract the masking agents, thus activating the latent ACNase. The sequence is that of Type I restriction enzyme EcoprrI endonuclease subunit from Escherichia coli.